Reading from the N-terminus, the 181-residue chain is MSGSAVSKRYASALFDIAVETSQINEIEEELTVLKEVFRNEAGLQEVLSHPKVSAAKKKELIQQSFGALSESVLHTIFLLIDRRRSSIVPDLTDEFIKLANQARQTEDAVVYSVKPLSEAEMLSLSQVFAKKAGIASLRIRNEVQTDLIGGIKVRIGNRIYDGSVSGKLERMERQLAGGNR.

This sequence belongs to the ATPase delta chain family. In terms of assembly, F-type ATPases have 2 components, F(1) - the catalytic core - and F(0) - the membrane proton channel. F(1) has five subunits: alpha(3), beta(3), gamma(1), delta(1), epsilon(1). F(0) has three main subunits: a(1), b(2) and c(10-14). The alpha and beta chains form an alternating ring which encloses part of the gamma chain. F(1) is attached to F(0) by a central stalk formed by the gamma and epsilon chains, while a peripheral stalk is formed by the delta and b chains.

It is found in the cell membrane. Its function is as follows. F(1)F(0) ATP synthase produces ATP from ADP in the presence of a proton or sodium gradient. F-type ATPases consist of two structural domains, F(1) containing the extramembraneous catalytic core and F(0) containing the membrane proton channel, linked together by a central stalk and a peripheral stalk. During catalysis, ATP synthesis in the catalytic domain of F(1) is coupled via a rotary mechanism of the central stalk subunits to proton translocation. Functionally, this protein is part of the stalk that links CF(0) to CF(1). It either transmits conformational changes from CF(0) to CF(1) or is implicated in proton conduction. In Bacillus velezensis (strain DSM 23117 / BGSC 10A6 / LMG 26770 / FZB42) (Bacillus amyloliquefaciens subsp. plantarum), this protein is ATP synthase subunit delta.